Consider the following 442-residue polypeptide: MEPTFHAFMFPWFAFGHMIPFLHLANKLAEKGHQITFLLPKKAQKQLEHHNLFPDSIVFHPLTIPHVNGLPAGAETTSDISISMDNLLSEALDLTRDQVEAAVRALRPDLIFFDFAHWIPEIAKEHMIKSVSYMIVSATTIAYTFAPGGVLGVPPPGYPSSKVLYRENDAHALATLSIFYKRLYHQITTGFKSCDIIALRTCNEIEGKFCDYISSQYHKKVLLTGPMLPEQDTSKPLEEQLSHFLSRFPPRSVVFCALGSQIVLEKDQFQELCLGMELTGLPFLIAVKPPRGSSTVEEGLPEGFQERVKGRGVVWGGWVQQPLILDHPSIGCFVNHCGPGTIWECLMTDCQMVLLPFLGDQVLFTRLMTEEFKVSVEVSREKTGWFSKESLSDAIKSVMDKDSDLGKLVRSNHAKLKETLGSHGLLTGYVDKFVEELQEYLI.

UDP-alpha-D-glucose contacts are provided by residues serine 260, 319 to 321 (VQQ), 336 to 344 (HCGPGTIWE), and 358 to 361 (LGDQ).

It belongs to the UDP-glycosyltransferase family.

This Arabidopsis thaliana (Mouse-ear cress) protein is UDP-glycosyltransferase 79B8 (UGT79B8).